Here is an 82-residue protein sequence, read N- to C-terminus: ATP synthase subunit c, chloroplastic (82 aa).

The next 2 helical transmembrane spans lie at 3–23 (PLIC…GAIG) and 57–77 (LAFM…LMFA).

This sequence belongs to the ATPase C chain family. As to quaternary structure, F-type ATPases have 2 components, F(1) - the catalytic core - and F(0) - the membrane proton channel. F(1) has five subunits: alpha(3), beta(3), gamma(1), delta(1), epsilon(1). F(0) has four main subunits: a(1), b(1), b'(1) and c(10-14). The alpha and beta chains form an alternating ring which encloses part of the gamma chain. F(1) is attached to F(0) by a central stalk formed by the gamma and epsilon chains, while a peripheral stalk is formed by the delta, b and b' chains.

It localises to the plastid. Its subcellular location is the chloroplast thylakoid membrane. Its function is as follows. F(1)F(0) ATP synthase produces ATP from ADP in the presence of a proton or sodium gradient. F-type ATPases consist of two structural domains, F(1) containing the extramembraneous catalytic core and F(0) containing the membrane proton channel, linked together by a central stalk and a peripheral stalk. During catalysis, ATP synthesis in the catalytic domain of F(1) is coupled via a rotary mechanism of the central stalk subunits to proton translocation. In terms of biological role, key component of the F(0) channel; it plays a direct role in translocation across the membrane. A homomeric c-ring of between 10-14 subunits forms the central stalk rotor element with the F(1) delta and epsilon subunits. The sequence is that of ATP synthase subunit c, chloroplastic from Ostreococcus tauri.